We begin with the raw amino-acid sequence, 308 residues long: Protein translocase subunit SecF (308 aa).

6 helical membrane passes run 23–42 (VSYS…IGIY), 140–160 (IEAG…YIGV), 164–184 (WYFG…ALGF), 194–214 (LSTI…SVVI), 246–266 (ILTV…GGKA), and 272–292 (VLVF…SAPI).

Belongs to the SecD/SecF family. SecF subfamily. As to quaternary structure, forms a complex with SecD. Part of the essential Sec protein translocation apparatus which comprises SecA, SecYEG and auxiliary proteins SecDF-YajC and YidC.

The protein resides in the cell inner membrane. Part of the Sec protein translocase complex. Interacts with the SecYEG preprotein conducting channel. SecDF uses the proton motive force (PMF) to complete protein translocation after the ATP-dependent function of SecA. The chain is Protein translocase subunit SecF from Rickettsia typhi (strain ATCC VR-144 / Wilmington).